The primary structure comprises 447 residues: NADH-quinone oxidoreductase subunit N (447 aa).

13 helical membrane passes run 4–24 (FAALLPVILLGAGAVTAMLAA), 27–47 (LPGLARWIAGFALVAASVALA), 68–88 (LTGLVVCLSGIGSLAFLRPDG), 92–112 (EGPALLLLATLGGVVLTGAVH), 113–133 (AASLFLGLELITLALVALFVL), 146–166 (FLILGAAAAATLLMGLALGHA), 181–201 (ALLTFAAALLLAGLAFKLALV), 215–235 (PGAAAAFAGAASKVAVVTALV), 245–265 (VWALGLGTFAGVSILLGNLAA), 280–300 (VGHAGYIAAALATGAASAPAA), 302–322 (LFYIVTYAPALLAALCVAALI), 342–362 (GAAMAAALVSLAGLPVSAGFF), and 376–395 (AWALLALAIAGSALGAYYYL).

Belongs to the complex I subunit 2 family. In terms of assembly, NDH-1 is composed of 14 different subunits. Subunits NuoA, H, J, K, L, M, N constitute the membrane sector of the complex.

The protein resides in the cell inner membrane. The catalysed reaction is a quinone + NADH + 5 H(+)(in) = a quinol + NAD(+) + 4 H(+)(out). Functionally, NDH-1 shuttles electrons from NADH, via FMN and iron-sulfur (Fe-S) centers, to quinones in the respiratory chain. The immediate electron acceptor for the enzyme in this species is believed to be ubiquinone. Couples the redox reaction to proton translocation (for every two electrons transferred, four hydrogen ions are translocated across the cytoplasmic membrane), and thus conserves the redox energy in a proton gradient. In Cereibacter sphaeroides (strain ATCC 17025 / ATH 2.4.3) (Rhodobacter sphaeroides), this protein is NADH-quinone oxidoreductase subunit N.